A 1035-amino-acid polypeptide reads, in one-letter code: MPVEFATNPFGEAKNATSLPKYGTPVTAISSVLFNNVDSIFAYKSFSQPDLLHQDLKKWSEKRGNESRGKPFFQELDIRSGAGLAPLGFSHGLKNTTAIVAPGFSLPYFINSLKTVSHDGKFLLNVGALNYDNATGSVTNDYVTALDAASKLKYGVVTPISANEVQSVALLALAIATFSNNSGAINLFDGLNYSKTVLPLVESVPEASILAKLSKVIAPDAAFDDVLDKFNELTGLRLHNFQYFGAQDAETVFITYGSLESELFNSAISGNNSKIGLINVRVPLPFNVAKFVTHVPSTTKQIVVIGQTLDGSSPSFLRSQVSAALFYHGRTSISVSEYIYQPDFIWSPKAVKSIVSSFIPEFTYNADSSFGEGFIYWASDKSINIDVASKLVKALSLEDGKFVSLRTKFDNLANAGTFQAQFVTSKEQIPVSNIDSTKLSVVEDVSLLKHLDVAATVAEQGSIALVSQKAVKDLDLNSVESYVKNLGIPESFLISIAKKNIKLFIIDGETTNDESKLSLFIQAVFWKLAFGLDVAECTNRIWKSIDSGADISAASISEFLTGAFKNFLSEVPLALYTKFSEINIEKKEDEEEPAALPIFVNETSFLPNNSTIEEIPLPETSEISDIAKKLSFKEAYEVENKLRPDLPVKNFVVKVKENRRVTPADYDRYIFHIEFDISGTGMTYDIGEALGIHARNNESLVKEFLTFYGLNESDVVLVPNKDNHHLLETRTVLQAFVENLDIFGKPPKRFYESLIPYASNEEEKKKLEDLVTPAGAVDLKRFQDVEYYTYADIFELFPSVRPSLEELVTIIEPLKRREYSIASSQKVHPNEVHLLIVVVDWVDNKGRKRYGQASKYISDLAVGSELVVSVKPSVMKLPPSPKQPVIMSGLGTGLAPFKAIVEEKLWQKQQGYEIGEVFLYLGSRHKREEYLYGELWEAYKDAGIITHIGAAFSRDQPQKIYIQDRIKENLDELKTAMIDNKGSFYLCGPTWPVPDITQALQDILAKDAEERGIKVDLDAAIEELKEASRYILEVY.

The FAD-binding FR-type domain maps to 648-879 (VKNFVVKVKE…VKPSVMKLPP (232 aa)). FAD-binding positions include 684–695 (YDIGEALGIHAR) and 814–824 (LKRREYSIASS).

FAD serves as cofactor. FMN is required as a cofactor.

The enzyme catalyses hydrogen sulfide + 3 NADP(+) + 3 H2O = sulfite + 3 NADPH + 4 H(+). It functions in the pathway sulfur metabolism; hydrogen sulfide biosynthesis; hydrogen sulfide from sulfite (NADPH route): step 1/1. Its function is as follows. This enzyme catalyzes the 6-electron reduction of sulfite to sulfide. This is one of several activities required for the biosynthesis of L-cysteine from sulfate. The polypeptide is Sulfite reductase [NADPH] flavoprotein component (MET10) (Saccharomyces cerevisiae (strain ATCC 204508 / S288c) (Baker's yeast)).